The sequence spans 461 residues: Alpha-L-fucosidase (461 aa).

The first 18 residues, 1–18, serve as a signal peptide directing secretion; that stretch reads MKMIIIFFILLILNLIKS.

It belongs to the glycosyl hydrolase 29 family.

It carries out the reaction an alpha-L-fucoside + H2O = L-fucose + an alcohol. In terms of biological role, alpha-L-fucosidase is responsible for hydrolyzing the alpha-1,6-linked fucose joined to the reducing-end N-acetylglucosamine of the carbohydrate moieties of glycoproteins. The chain is Alpha-L-fucosidase (alfA) from Dictyostelium discoideum (Social amoeba).